A 351-amino-acid chain; its full sequence is Uroporphyrinogen decarboxylase (351 aa).

Substrate is bound by residues 26–30, Asp75, Tyr151, Ser206, and His321; that span reads RQAGR.

The protein belongs to the uroporphyrinogen decarboxylase family. As to quaternary structure, homodimer.

It localises to the cytoplasm. It catalyses the reaction uroporphyrinogen III + 4 H(+) = coproporphyrinogen III + 4 CO2. It functions in the pathway porphyrin-containing compound metabolism; protoporphyrin-IX biosynthesis; coproporphyrinogen-III from 5-aminolevulinate: step 4/4. Functionally, catalyzes the decarboxylation of four acetate groups of uroporphyrinogen-III to yield coproporphyrinogen-III. This Koribacter versatilis (strain Ellin345) protein is Uroporphyrinogen decarboxylase.